Reading from the N-terminus, the 488-residue chain is Glutamyl-tRNA(Gln) amidotransferase subunit A (488 aa).

Active-site charge relay system residues include K77 and S152. The Acyl-ester intermediate role is filled by S176.

It belongs to the amidase family. GatA subfamily. As to quaternary structure, heterotrimer of A, B and C subunits.

The catalysed reaction is L-glutamyl-tRNA(Gln) + L-glutamine + ATP + H2O = L-glutaminyl-tRNA(Gln) + L-glutamate + ADP + phosphate + H(+). Allows the formation of correctly charged Gln-tRNA(Gln) through the transamidation of misacylated Glu-tRNA(Gln) in organisms which lack glutaminyl-tRNA synthetase. The reaction takes place in the presence of glutamine and ATP through an activated gamma-phospho-Glu-tRNA(Gln). The chain is Glutamyl-tRNA(Gln) amidotransferase subunit A from Streptococcus pneumoniae (strain Hungary19A-6).